The primary structure comprises 262 residues: METLSYSQIKKRKADFDEDISKRARQLPVGEQLPLSRLLQYSDKQQLFTILLQCVEKHPDLARDIRGILPAPSMDTCVETLRKLLINLNDSFPYGGDKRGDYAFNRIREKYMAVLHALNDMVPCYLPPYSTCFEKNITFLDAATNVVHELPEFHNPNHNVYKSQAYYELTGAWLVVLRQLEDRPVVPLLPLEELEEHNKTSQNRMEEALNYLKQLQKNEPLVHERSHTFQQTNPQNNFHRHTNSMNIGNDNGMGWHSMHQYI.

Belongs to the cut8/STS1 family. In terms of assembly, binds the proteasome. Post-translationally, the N-terminal part (residues 1 to 72) is polyubiquitinated by rhp6, which is required for the interaction with the proteasome.

Its subcellular location is the nucleus envelope. Functionally, together with nucleoporin alm1, tethers the proteasome to the nuclear envelope. Involved in ubiquitin-mediated protein degradation and facilitates the degradation of nuclear proteins like mitotic cyclin and cut2. Required for normal progression of anaphase. This is Tethering factor for nuclear proteasome cut8 from Schizosaccharomyces pombe (strain 972 / ATCC 24843) (Fission yeast).